We begin with the raw amino-acid sequence, 305 residues long: UDP-3-O-acyl-N-acetylglucosamine deacetylase (305 aa).

Residues histidine 79, histidine 238, and aspartate 242 each coordinate Zn(2+). Histidine 265 functions as the Proton donor in the catalytic mechanism.

It belongs to the LpxC family. It depends on Zn(2+) as a cofactor.

It carries out the reaction a UDP-3-O-[(3R)-3-hydroxyacyl]-N-acetyl-alpha-D-glucosamine + H2O = a UDP-3-O-[(3R)-3-hydroxyacyl]-alpha-D-glucosamine + acetate. It functions in the pathway glycolipid biosynthesis; lipid IV(A) biosynthesis; lipid IV(A) from (3R)-3-hydroxytetradecanoyl-[acyl-carrier-protein] and UDP-N-acetyl-alpha-D-glucosamine: step 2/6. Its function is as follows. Catalyzes the hydrolysis of UDP-3-O-myristoyl-N-acetylglucosamine to form UDP-3-O-myristoylglucosamine and acetate, the committed step in lipid A biosynthesis. In Colwellia psychrerythraea (strain 34H / ATCC BAA-681) (Vibrio psychroerythus), this protein is UDP-3-O-acyl-N-acetylglucosamine deacetylase.